We begin with the raw amino-acid sequence, 121 residues long: Putative ferredoxin (121 aa).

To E.coli YkgJ.

This is Putative ferredoxin from Acinetobacter calcoaceticus.